We begin with the raw amino-acid sequence, 1034 residues long: Probable outer membrane protein PmpF (1034 aa).

An N-terminal signal peptide occupies residues 1–25 (MIKRTSLSFACLSFFYLSTISILQA). Low complexity-rich tracts occupy residues 664–673 (SAPTSATSIA) and 680–709 (ETFT…ASNS). The interval 664–709 (SAPTSATSIAEQKKTSETFTPSNTTTASIPNIKASAGSGSGSASNS) is disordered. The Autotransporter domain maps to 755-1034 (RSLLPDNSWF…YINAGGALVF (280 aa)).

The protein belongs to the PMP outer membrane protein family.

It is found in the secreted. The protein localises to the cell wall. Its subcellular location is the cell outer membrane. The protein is Probable outer membrane protein PmpF (pmpF) of Chlamydia trachomatis serovar D (strain ATCC VR-885 / DSM 19411 / UW-3/Cx).